We begin with the raw amino-acid sequence, 1029 residues long: Chitin synthase 3 (1029 aa).

The tract at residues 1-29 (MAYYSRPASAGAARAQDDQDPYPYYPDPD) is disordered. Asparagine 37 carries N-linked (GlcNAc...) asparagine glycosylation. The segment covering 46–71 (ASGAASSASHTSPFSDAHAASASPAS) has biased composition (low complexity). Disordered regions lie at residues 46–105 (ASGA…SRMP) and 168–209 (LAHR…AGTS). Residues 76-91 (SHQQVSAHAPQQQHMS) show a composition bias toward polar residues. Basic and acidic residues predominate over residues 191–202 (AHDEKYAYDRPD). 4 N-linked (GlcNAc...) asparagine glycosylation sites follow: asparagine 401, asparagine 514, asparagine 527, and asparagine 689. 7 consecutive transmembrane segments (helical) span residues 723–743 (FYSFVNMCFAWFGLANYYIFF), 760–780 (IGVFNVFMQYIYLGTVVSSFI), 796–816 (AAVVVFALLTVYMMVAAVLCL), 830–850 (AQMVVSLLATYGVYLISSLLA), 860–880 (FLQYLLLAPTYINILNIYAFC), 963–983 (VVLAWALSNGVLAAFILNGDA), and 998–1018 (VYMVLVLIFVAGMACIRFIGS).

It belongs to the chitin synthase family. Class I subfamily.

It localises to the cell membrane. The protein localises to the cytoplasmic vesicle membrane. It carries out the reaction [(1-&gt;4)-N-acetyl-beta-D-glucosaminyl](n) + UDP-N-acetyl-alpha-D-glucosamine = [(1-&gt;4)-N-acetyl-beta-D-glucosaminyl](n+1) + UDP + H(+). Functionally, polymerizes chitin, a structural polymer of the cell wall and septum, by transferring the sugar moiety of UDP-GlcNAc to the non-reducing end of the growing chitin polymer. The chain is Chitin synthase 3 from Mycosarcoma maydis (Corn smut fungus).